We begin with the raw amino-acid sequence, 323 residues long: Olfactory receptor 5P58 (323 aa).

The Extracellular portion of the chain corresponds to 1 to 28; sequence MAFLEDGNHTAVTEFILVGLTDDPVLKV. N-linked (GlcNAc...) asparagine glycosylation occurs at asparagine 8. The chain crosses the membrane as a helical span at residues 29–49; it reads ILFTIILCIYLVTVSGNLSTI. Residues 50–57 lie on the Cytoplasmic side of the membrane; it reads LLIRVSSQ. A helical membrane pass occupies residues 58-78; the sequence is LHHPMYFFLSHLASVDLGYSS. At 79-102 the chain is on the extracellular side; the sequence is SVTPNMLINFLAENNTISYIGCSI. An N-linked (GlcNAc...) asparagine glycan is attached at asparagine 92. Cysteine 100 and cysteine 192 form a disulfide bridge. A helical transmembrane segment spans residues 103-123; the sequence is QFGSATFFGVLECFLLAVMAY. Topologically, residues 124-136 are cytoplasmic; that stretch reads DRFVAICNPLLYS. A helical membrane pass occupies residues 137 to 157; sequence IKMSTQVCVKLVVGSYIGSSL. Over 158–199 the chain is Extracellular; that stretch reads NASFVTVSIFNLLFCGPNKINHFFCDFDPLIELSCSDVSVPV. A helical membrane pass occupies residues 200–220; it reads AVTSCSAGLITMITVFVIAVS. Residues 221–240 are Cytoplasmic-facing; the sequence is YTYILITVLKMRSTEGRHKA. Residues 241 to 261 traverse the membrane as a helical segment; that stretch reads FSTCTSHLTAVTLFYGTVTFI. Residues 262 to 274 are Extracellular-facing; the sequence is YVMPKSNYSTDQN. The N-linked (GlcNAc...) asparagine glycan is linked to asparagine 268. A helical transmembrane segment spans residues 275–295; the sequence is KVVSVFYMVVIPMLNPLIYSL. The Cytoplasmic portion of the chain corresponds to 296-323; sequence RNNEIKGALKRQLGKKIFSQSNILFCKS.

This sequence belongs to the G-protein coupled receptor 1 family.

It localises to the cell membrane. In terms of biological role, potential odorant receptor. The protein is Olfactory receptor 5P58 of Mus musculus (Mouse).